The primary structure comprises 538 residues: Probable inorganic phosphate transporter 1-4 (538 aa).

Over 1–23 the chain is Cytoplasmic; sequence MAGELKVLNALDSAKTQWYHFTA. The helical transmembrane segment at 24 to 44 threads the bilayer; sequence IVIAGMGFFTDAYDLFSISLV. At 45-69 the chain is on the extracellular side; it reads TKLLGRIYYFNPASKSPGSLPPNVS. Residues 70–90 traverse the membrane as a helical segment; sequence AAVNGVAFCGTLAGQLFFGWL. Topologically, residues 91–98 are cytoplasmic; it reads GDKMGRKK. A helical transmembrane segment spans residues 99–119; the sequence is VYGMTLMLMVICCLASGLSFG. Over 120 to 123 the chain is Extracellular; the sequence is SSAK. The helical transmembrane segment at 124-144 threads the bilayer; that stretch reads GVMATLCFFRFWLGFGIGGDY. Residues 145–163 are Cytoplasmic-facing; the sequence is PLSATIMSEYANKRTRGAF. The helical transmembrane segment at 164–184 threads the bilayer; that stretch reads IAAVFAMQGFGNLTGGIVAII. Residues 185-210 lie on the Extracellular side of the membrane; sequence VSAAFKARFDAPAYRDDRAGSTVPQA. A helical transmembrane segment spans residues 211–231; it reads DYAWRIVLMFGAIPALLTYYW. At 232–294 the chain is on the cytoplasmic side; that stretch reads RMKMPETARY…RQFLRRHGRH (63 aa). The chain crosses the membrane as a helical span at residues 295–315; sequence LLGTTVCWFVLDIAFYSSNLF. At 316 to 346 the chain is on the extracellular side; the sequence is QKDIYTAVQWLPKADTMSALEEMFKISRAQT. A helical transmembrane segment spans residues 347–367; that stretch reads LVALCGTIPGYWFTVFFIDII. The Cytoplasmic portion of the chain corresponds to 368 to 369; the sequence is GR. A helical membrane pass occupies residues 370–390; that stretch reads FVIQLGGFFFMTAFMLGLAVP. Residues 391-396 lie on the Extracellular side of the membrane; sequence YHHWTT. A helical transmembrane segment spans residues 397–417; it reads PGNHIGFVVMYAFTFFFANFG. The Cytoplasmic portion of the chain corresponds to 418 to 440; the sequence is PNSTTFIVPAEIFPARLRSTCHG. The chain crosses the membrane as a helical span at residues 441–461; sequence ISAAAGKAGAIVGSFGFLYAA. Residues 462–481 are Extracellular-facing; it reads QSTDASKTDAGYPPGIGVRN. A helical transmembrane segment spans residues 482 to 502; sequence SLFFLAGCNVIGFFFTFLVPE. Over 503 to 538 the chain is Cytoplasmic; it reads SKGKSLEELSGENEDDDDVPEAPSTADHRTAPAPPA. Positions 507–538 are disordered; the sequence is SLEELSGENEDDDDVPEAPSTADHRTAPAPPA. A compositionally biased stretch (acidic residues) spans 511-522; it reads LSGENEDDDDVP.

The protein belongs to the major facilitator superfamily. Phosphate:H(+) symporter (TC 2.A.1.9) family.

It is found in the membrane. Functionally, high-affinity transporter for external inorganic phosphate. This Oryza sativa subsp. indica (Rice) protein is Probable inorganic phosphate transporter 1-4 (PHT1-4).